A 385-amino-acid polypeptide reads, in one-letter code: Spermidine/putrescine import ATP-binding protein PotA (385 aa).

In terms of domain architecture, ABC transporter spans 27 to 257 (ASFRAVSKHY…PANLFVAQFA (231 aa)). ATP is bound at residue 59–66 (GPSGCGKT).

This sequence belongs to the ABC transporter superfamily. Spermidine/putrescine importer (TC 3.A.1.11.1) family. The complex is composed of two ATP-binding proteins (PotA), two transmembrane proteins (PotB and PotC) and a solute-binding protein (PotD).

It is found in the cell inner membrane. The catalysed reaction is ATP + H2O + polyamine-[polyamine-binding protein]Side 1 = ADP + phosphate + polyamineSide 2 + [polyamine-binding protein]Side 1.. Functionally, part of the ABC transporter complex PotABCD involved in spermidine/putrescine import. Responsible for energy coupling to the transport system. This Methylococcus capsulatus (strain ATCC 33009 / NCIMB 11132 / Bath) protein is Spermidine/putrescine import ATP-binding protein PotA.